A 427-amino-acid polypeptide reads, in one-letter code: Glutamate-1-semialdehyde 2,1-aminomutase (427 aa).

Lys-265 carries the post-translational modification N6-(pyridoxal phosphate)lysine.

Belongs to the class-III pyridoxal-phosphate-dependent aminotransferase family. HemL subfamily. As to quaternary structure, homodimer. The cofactor is pyridoxal 5'-phosphate.

It localises to the cytoplasm. It catalyses the reaction (S)-4-amino-5-oxopentanoate = 5-aminolevulinate. It participates in porphyrin-containing compound metabolism; protoporphyrin-IX biosynthesis; 5-aminolevulinate from L-glutamyl-tRNA(Glu): step 2/2. This chain is Glutamate-1-semialdehyde 2,1-aminomutase, found in Pseudomonas putida (strain W619).